The following is a 127-amino-acid chain: DNA-directed RNA polymerases I, II, and III subunit RPABC2 (127 aa).

Over residues 1 to 34 the composition is skewed to acidic residues; the sequence is MSDNEDNFDGDDFDDVEEDEGLDDLENAEEEGQE. A disordered region spans residues 1–53; sequence MSDNEDNFDGDDFDDVEEDEGLDDLENAEEEGQENVEILPSGERPQANQKRIT. Ser-2 is modified (N-acetylserine). Ser-2 carries the post-translational modification Phosphoserine; by CK2.

This sequence belongs to the archaeal Rpo6/eukaryotic RPB6 RNA polymerase subunit family. As to quaternary structure, component of the RNA polymerase I (Pol I), RNA polymerase II (Pol II) and RNA polymerase III (Pol III) complexes consisting of at least 13, 12 and 17 subunits, respectively. Pol I complex consists of a ten-subunit catalytic core composed of POLR1A/RPA1, POLR1B/RPA2, POLR1C/RPAC1, POLR1D/RPAC2, POLR1H/RPA12, POLR2E/RPABC1, POLR2F/RPABC2, POLR2H/RPABC3, POLR2K/RPABC4 and POLR2L/RPABC5; a mobile stalk subunit POLR1F/RPA43 protruding from the core and additional subunits homologous to general transcription factors POLR1E/RPA49 and POLR1G/RPA34. Part of Pol I pre-initiation complex (PIC), in which Pol I core assembles with RRN3 and promoter-bound UTBF and SL1/TIF-IB complex. Pol II complex contains a ten-subunit catalytic core composed of POLR2A/RPB1, POLR2B/RPB2, POLR2C/RPB3, POLR2I/RPB9, POLR2J/RPB11, POLR2E/RPABC1, POLR2F/RPABC2, POLR2H/RPABC3, POLR2K/RPABC4 and POLR2L/RPABC5 and a mobile stalk composed of two subunits POLR2D/RPB4 and POLR2G/RPB7. Part of Pol II(G) complex, in which Pol II core associates with an additional subunit POLR2M; unlike conventional Pol II, Pol II(G) functions as a transcriptional repressor. Part of TBP-based Pol II pre-initiation complex (PIC), in which Pol II core assembles with general transcription factors and other specific initiation factors including GTF2E1, GTF2E2, GTF2F1, GTF2F2, TCEA1, ERCC2, ERCC3, GTF2H2, GTF2H3, GTF2H4, GTF2H5, GTF2A1, GTF2A2, GTF2B and TBP; this large multi-subunit PIC complex mediates DNA unwinding and targets Pol II core to the transcription start site where the first phosphodiester bond forms. Pol III complex consists of a ten-subunit catalytic core composed of POLR3A/RPC1, POLR3B/RPC2, POLR1C/RPAC1, POLR1D/RPAC2, POLR3K/RPC10, POLR2E/RPABC1, POLR2F/RPABC2, POLR2H/RPABC3, POLR2K/RPABC4 and POLR2L/RPABC5; a mobile stalk composed of two subunits POLR3H/RPC8 and CRCP/RPC9, protruding from the core and functioning primarily in transcription initiation; and additional subunits homologous to general transcription factors of the RNA polymerase II machinery, POLR3C/RPC3-POLR3F/RPC6-POLR3G/RPC7 heterotrimer required for transcription initiation and POLR3D/RPC4-POLR3E/RPC5 heterodimer involved in both transcription initiation and termination.

Its subcellular location is the nucleus. The protein resides in the nucleolus. Functionally, DNA-dependent RNA polymerase catalyzes the transcription of DNA into RNA using the four ribonucleoside triphosphates as substrates. Common component of RNA polymerases I, II, and III which synthesize ribosomal RNA precursors, mRNA precursors and many functional non-coding RNAs, and small RNAs, such as 5S rRNA and tRNAs, respectively. Pol II is the central component of the basal RNA polymerase II transcription machinery. Pols are composed of mobile elements that move relative to each other. In Pol II, POLR2F/RPABC2 is part of the clamp element and together with parts of POLR2A/RPB1 and POLR2B/RPB2 forms a pocket to which the POLR2D/RPB4-POLR2G/RPB7 subcomplex binds. The polypeptide is DNA-directed RNA polymerases I, II, and III subunit RPABC2 (Homo sapiens (Human)).